Consider the following 208-residue polypeptide: Sexual inducer glycoprotein (208 aa).

The signal sequence occupies residues 1–11; it reads MAVVVVNSATA. Residues Asn-89, Asn-119, Asn-131, Asn-139, Asn-146, and Asn-188 are each glycosylated (N-linked (GlcNAc...) asparagine).

In terms of biological role, the sexual inducer is a glycoprotein synthesized and released by sexual males at about the time they release sperm packets. It is one of the most potent biological effector molecules known: it exhibits full effectiveness in converting asexually growing males and females to the sexual pathway at about 10(-7) m. The protein is Sexual inducer glycoprotein of Volvox carteri (Green alga).